The chain runs to 249 residues: Putative TrmH family tRNA/rRNA methyltransferase (249 aa).

S-adenosyl-L-methionine-binding residues include G196, I216, and L225.

Belongs to the class IV-like SAM-binding methyltransferase superfamily. RNA methyltransferase TrmH family.

This Staphylococcus saprophyticus subsp. saprophyticus (strain ATCC 15305 / DSM 20229 / NCIMB 8711 / NCTC 7292 / S-41) protein is Putative TrmH family tRNA/rRNA methyltransferase.